The following is a 429-amino-acid chain: Histidine--tRNA ligase (429 aa).

The protein belongs to the class-II aminoacyl-tRNA synthetase family. In terms of assembly, homodimer.

The protein localises to the cytoplasm. It carries out the reaction tRNA(His) + L-histidine + ATP = L-histidyl-tRNA(His) + AMP + diphosphate + H(+). The polypeptide is Histidine--tRNA ligase (Escherichia fergusonii (strain ATCC 35469 / DSM 13698 / CCUG 18766 / IAM 14443 / JCM 21226 / LMG 7866 / NBRC 102419 / NCTC 12128 / CDC 0568-73)).